A 193-amino-acid chain; its full sequence is Crossover junction endodeoxyribonuclease RuvC (193 aa).

Residues aspartate 7, glutamate 68, and aspartate 141 contribute to the active site. Positions 7, 68, and 141 each coordinate Mg(2+).

This sequence belongs to the RuvC family. As to quaternary structure, homodimer which binds Holliday junction (HJ) DNA. The HJ becomes 2-fold symmetrical on binding to RuvC with unstacked arms; it has a different conformation from HJ DNA in complex with RuvA. In the full resolvosome a probable DNA-RuvA(4)-RuvB(12)-RuvC(2) complex forms which resolves the HJ. Mg(2+) is required as a cofactor.

The protein resides in the cytoplasm. The catalysed reaction is Endonucleolytic cleavage at a junction such as a reciprocal single-stranded crossover between two homologous DNA duplexes (Holliday junction).. In terms of biological role, the RuvA-RuvB-RuvC complex processes Holliday junction (HJ) DNA during genetic recombination and DNA repair. Endonuclease that resolves HJ intermediates. Cleaves cruciform DNA by making single-stranded nicks across the HJ at symmetrical positions within the homologous arms, yielding a 5'-phosphate and a 3'-hydroxyl group; requires a central core of homology in the junction. The consensus cleavage sequence is 5'-(A/T)TT(C/G)-3'. Cleavage occurs on the 3'-side of the TT dinucleotide at the point of strand exchange. HJ branch migration catalyzed by RuvA-RuvB allows RuvC to scan DNA until it finds its consensus sequence, where it cleaves and resolves the cruciform DNA. The chain is Crossover junction endodeoxyribonuclease RuvC from Bifidobacterium adolescentis (strain ATCC 15703 / DSM 20083 / NCTC 11814 / E194a).